Reading from the N-terminus, the 89-residue chain is MFLALTSIAIPAAIVIPISLIANLPNCGISLTFSMTIGFVGLILTIAASPVFKNCGFSSMTCPVLGSNFFNNSMNVHATCAVCAWKTGV.

The next 2 helical transmembrane spans lie at 1 to 21 (MFLALTSIAIPAAIVIPISLI) and 28 to 48 (GISLTFSMTIGFVGLILTIAA).

It localises to the cell membrane. This is an uncharacterized protein from Methanocaldococcus jannaschii (strain ATCC 43067 / DSM 2661 / JAL-1 / JCM 10045 / NBRC 100440) (Methanococcus jannaschii).